A 135-amino-acid polypeptide reads, in one-letter code: Small ribosomal subunit protein eS24A (135 aa).

The residue at position 2 (S2) is an N-acetylserine. A Phosphoserine modification is found at S14. K21 participates in a covalent cross-link: Glycyl lysine isopeptide (Lys-Gly) (interchain with G-Cter in ubiquitin). The residue at position 56 (S56) is a Phosphoserine. A disordered region spans residues 102–135 (KASRQQRKQKKNRDKKIFGTGKRLAKKVARRNAD). Composition is skewed to basic residues over residues 105–115 (RQQRKQKKNRD) and 124–135 (RLAKKVARRNAD).

The protein belongs to the eukaryotic ribosomal protein eS24 family. As to quaternary structure, component of the small ribosomal subunit (SSU). Mature yeast ribosomes consist of a small (40S) and a large (60S) subunit. The 40S small subunit contains 1 molecule of ribosomal RNA (18S rRNA) and 33 different proteins (encoded by 57 genes). The large 60S subunit contains 3 rRNA molecules (25S, 5.8S and 5S rRNA) and 46 different proteins (encoded by 81 genes). In terms of processing, N-terminally acetylated by acetyltransferase NatA. Also partially acetylated by NatC.

It localises to the cytoplasm. In terms of biological role, component of the ribosome, a large ribonucleoprotein complex responsible for the synthesis of proteins in the cell. The small ribosomal subunit (SSU) binds messenger RNAs (mRNAs) and translates the encoded message by selecting cognate aminoacyl-transfer RNA (tRNA) molecules. The large subunit (LSU) contains the ribosomal catalytic site termed the peptidyl transferase center (PTC), which catalyzes the formation of peptide bonds, thereby polymerizing the amino acids delivered by tRNAs into a polypeptide chain. The nascent polypeptides leave the ribosome through a tunnel in the LSU and interact with protein factors that function in enzymatic processing, targeting, and the membrane insertion of nascent chains at the exit of the ribosomal tunnel. This Saccharomyces cerevisiae (strain ATCC 204508 / S288c) (Baker's yeast) protein is Small ribosomal subunit protein eS24A.